Reading from the N-terminus, the 205-residue chain is ATP phosphoribosyltransferase (205 aa).

Belongs to the ATP phosphoribosyltransferase family. Short subfamily. In terms of assembly, heteromultimer composed of HisG and HisZ subunits.

Its subcellular location is the cytoplasm. The catalysed reaction is 1-(5-phospho-beta-D-ribosyl)-ATP + diphosphate = 5-phospho-alpha-D-ribose 1-diphosphate + ATP. It functions in the pathway amino-acid biosynthesis; L-histidine biosynthesis; L-histidine from 5-phospho-alpha-D-ribose 1-diphosphate: step 1/9. Catalyzes the condensation of ATP and 5-phosphoribose 1-diphosphate to form N'-(5'-phosphoribosyl)-ATP (PR-ATP). Has a crucial role in the pathway because the rate of histidine biosynthesis seems to be controlled primarily by regulation of HisG enzymatic activity. The polypeptide is ATP phosphoribosyltransferase (Ruthia magnifica subsp. Calyptogena magnifica).